The sequence spans 314 residues: Ribosomal RNA small subunit methyltransferase H (314 aa).

Residues 36-38, Asp-56, Phe-83, Asp-104, and Gln-111 contribute to the S-adenosyl-L-methionine site; that span reads AGH.

The protein belongs to the methyltransferase superfamily. RsmH family.

The protein localises to the cytoplasm. The catalysed reaction is cytidine(1402) in 16S rRNA + S-adenosyl-L-methionine = N(4)-methylcytidine(1402) in 16S rRNA + S-adenosyl-L-homocysteine + H(+). Its function is as follows. Specifically methylates the N4 position of cytidine in position 1402 (C1402) of 16S rRNA. The chain is Ribosomal RNA small subunit methyltransferase H from Brevibacillus brevis (strain 47 / JCM 6285 / NBRC 100599).